The primary structure comprises 611 residues: Alkyldihydroxyacetonephosphate synthase (611 aa).

An FAD-binding PCMH-type domain is found at 137 to 317 (VKNAPDLIVL…TEAVMKVHAV (181 aa)). FAD contacts are provided by residues 169–175 (PMGGGSN), 237–243 (DSFEFST), 250–255 (TCSSGH), and 301–307 (EGTLGII). R447 is a binding site for substrate. Catalysis depends on Y508, which acts as the Proton donor/acceptor. Positions 544 to 546 (HHH) are important for enzyme activity. The Microbody targeting signal signature appears at 609–611 (PKL).

It belongs to the FAD-binding oxidoreductase/transferase type 4 family. In terms of assembly, homodimer. Requires FAD as cofactor.

Its subcellular location is the peroxisome. The enzyme catalyses a long chain fatty alcohol + a 1-acylglycerone 3-phosphate = a 1-O-alkylglycerone 3-phosphate + a long-chain fatty acid + H(+). It participates in glycerolipid metabolism; ether lipid biosynthesis. Catalyzes the exchange of an acyl for a long-chain alkyl group and the formation of the ether bond in the biosynthesis of ether phospholipids. This Dictyostelium discoideum (Social amoeba) protein is Alkyldihydroxyacetonephosphate synthase (eapA).